A 477-amino-acid polypeptide reads, in one-letter code: Enolase 1, chloroplastic (477 aa).

A chloroplast-targeting transit peptide spans M1–Q41. 2 residues coordinate substrate: H203 and E212. E255 serves as the catalytic Proton donor. Mg(2+) contacts are provided by D290, E340, and D365. 2 residues coordinate substrate: E340 and D365. Catalysis depends on K390, which acts as the Proton acceptor. Substrate is bound by residues S417–S420 and K441. The residue at position 476 (S476) is a Phosphoserine.

Belongs to the enolase family. Mg(2+) is required as a cofactor. In terms of tissue distribution, highly expressed in young roots, young siliques, and shoot apex. Lowly expressed in young leaves, stems and cotyledons.

Its subcellular location is the plastid. It is found in the chloroplast. It catalyses the reaction (2R)-2-phosphoglycerate = phosphoenolpyruvate + H2O. The protein operates within carbohydrate degradation; glycolysis; pyruvate from D-glyceraldehyde 3-phosphate: step 4/5. In Arabidopsis thaliana (Mouse-ear cress), this protein is Enolase 1, chloroplastic (ENO1).